The chain runs to 282 residues: MTIQWFPGHMAKARREVTEKLKLIDIVFELTDARIPMSSRNPMIEEILQNKPKIMLLNKADKADPRVTKEWQAHFEQQGVRSLAINSVDGQGLNQIITTSKEILKEKFDRMKAKGVKPRAIRALIIGIPNVGKSTLINRLAKKNIAKTGDRPGITTSQQWVKVGKEMELLDTPGILWPKFEDEKVGLRLAVTGAIKDSIINLQDVAVYGLRFLEENYPERLKKRYDLTDIPEDTAELFDAIGTKRGCLMSGGFINYDKTTEIIIRDIRTEKFGPLTFEKPES.

Residues 14-178 (RREVTEKLKL…LLDTPGILWP (165 aa)) form the CP-type G domain. GTP contacts are provided by residues 58–61 (NKAD), 86–87 (NS), 130–135 (NVGKST), and Gly-174.

This sequence belongs to the TRAFAC class YlqF/YawG GTPase family. MTG1 subfamily. As to quaternary structure, interacts with ctc. Interacts with the immature 50S ribosome subunit. 2 molecules of rbgA bind to one 50S subunit.

Its subcellular location is the cytoplasm. In terms of biological role, essential protein that is required for a late step of 50S ribosomal subunit assembly. Has GTPase activity that is stimulated by interaction with the immature 50S ribosome subunit. Binds to the 23S rRNA. Required for the association of ribosomal proteins rplP and rpmA with the large subunit. In Bacillus pumilus (strain SAFR-032), this protein is Ribosome biogenesis GTPase A.